The primary structure comprises 233 residues: Small ribosomal subunit protein uS3 (233 aa).

Residues 39–107 enclose the KH type-2 domain; that stretch reads VRQYLTKELA…PAQINIAEVR (69 aa).

The protein belongs to the universal ribosomal protein uS3 family. In terms of assembly, part of the 30S ribosomal subunit. Forms a tight complex with proteins S10 and S14.

Binds the lower part of the 30S subunit head. Binds mRNA in the 70S ribosome, positioning it for translation. This Citrobacter koseri (strain ATCC BAA-895 / CDC 4225-83 / SGSC4696) protein is Small ribosomal subunit protein uS3.